The sequence spans 384 residues: Brix domain-containing protein F44G4.1 (384 aa).

Disordered regions lie at residues 1–58 (MAPK…KVVK) and 82–135 (SKAT…PQKE). A compositionally biased stretch (acidic residues) spans 18–48 (FVEEEVTGDVDEDGFEQAEDMPDEVDSDEDE). Basic residues predominate over residues 96–114 (LPKSQRGKALKRALRKDKR). The segment covering 115–127 (ARQGERAQIRDEL) has biased composition (basic and acidic residues). The region spanning 177-360 (PKVMITMTPK…LKWLQKGTFD (184 aa)) is the Brix domain.

The sequence is that of Brix domain-containing protein F44G4.1 from Caenorhabditis elegans.